A 282-amino-acid polypeptide reads, in one-letter code: 4-diphosphocytidyl-2-C-methyl-D-erythritol kinase (282 aa).

K11 is a catalytic residue. 95–105 (PMGGGVGGGSS) serves as a coordination point for ATP. D137 is an active-site residue.

The protein belongs to the GHMP kinase family. IspE subfamily.

It catalyses the reaction 4-CDP-2-C-methyl-D-erythritol + ATP = 4-CDP-2-C-methyl-D-erythritol 2-phosphate + ADP + H(+). It functions in the pathway isoprenoid biosynthesis; isopentenyl diphosphate biosynthesis via DXP pathway; isopentenyl diphosphate from 1-deoxy-D-xylulose 5-phosphate: step 3/6. Functionally, catalyzes the phosphorylation of the position 2 hydroxy group of 4-diphosphocytidyl-2C-methyl-D-erythritol. In Haemophilus ducreyi (strain 35000HP / ATCC 700724), this protein is 4-diphosphocytidyl-2-C-methyl-D-erythritol kinase.